Here is a 296-residue protein sequence, read N- to C-terminus: Enoyl-CoA hydratase domain-containing protein 2, mitochondrial (296 aa).

The residue at position 101 (Lys101) is an N6-acetyllysine; alternate. The residue at position 101 (Lys101) is an N6-succinyllysine; alternate.

Belongs to the enoyl-CoA hydratase/isomerase family.

The protein resides in the mitochondrion. The polypeptide is Enoyl-CoA hydratase domain-containing protein 2, mitochondrial (ECHDC2) (Bos taurus (Bovine)).